Here is a 123-residue protein sequence, read N- to C-terminus: Ribonuclease P protein component (123 aa).

This sequence belongs to the RnpA family. Consists of a catalytic RNA component (M1 or rnpB) and a protein subunit.

The enzyme catalyses Endonucleolytic cleavage of RNA, removing 5'-extranucleotides from tRNA precursor.. In terms of biological role, RNaseP catalyzes the removal of the 5'-leader sequence from pre-tRNA to produce the mature 5'-terminus. It can also cleave other RNA substrates such as 4.5S RNA. The protein component plays an auxiliary but essential role in vivo by binding to the 5'-leader sequence and broadening the substrate specificity of the ribozyme. The protein is Ribonuclease P protein component of Streptomyces griseus subsp. griseus (strain JCM 4626 / CBS 651.72 / NBRC 13350 / KCC S-0626 / ISP 5235).